The primary structure comprises 314 residues: Citrate/oxoglutarate carrier protein (314 aa).

Solcar repeat units follow at residues 18 to 100 (VSFS…EAEY), 107 to 199 (LNNF…VEDG), and 217 to 301 (EKIG…AKEF). A run of 5 helical transmembrane segments spans residues 23-44 (ILLG…LEVV), 77-97 (IPWA…VSAE), 111-127 (ASGI…QAYL), 178-198 (VAIR…LVED), and 218-238 (KIGA…IEVI). The DNA-binding element occupies 246-259 (KEDPNRPKNLTVGK). Residues 273-294 (LYRGVTPRIGLGIWQTVFMVGF) traverse the membrane as a helical segment.

Belongs to the mitochondrial carrier (TC 2.A.29) family.

Its subcellular location is the mitochondrion inner membrane. It localises to the mitochondrion matrix. The protein resides in the mitochondrion nucleoid. With respect to regulation, strongly inhibited by mersalyl, p-chloromercuribenzenesulfonate, mercuric chloride, N-ethylmaleimide, pyridoxal 5'-phosphate, bathophenanthroline, and tannic acid. Partially inhibited by alpha-cyanocinnamate and bromescol purple. Weakly inhibited by butylmalonate and phenylsuccinate. Not inhibited by 1,2,3-benzenetricarboxylate or carboxyatractyloside. Its function is as follows. Mitochondrial antiporter which catalyzes the transport of citrate and oxoglutarate across the membrane. Also shows specificity for oxaloacetate, and to a lesser extent succinate and fumarate. Transports isocitrate, cis-aconitate and L-malate with very low efficiency. Does not show uniporter activity. Helps to maintain normal citrate levels and NADPH/NADP(+) ratios under conditions of oxidative stress. In addition, associates with the mitochondrial nucleoid and binds DNA in vitro, although the relevance of these data in vivo is unclear. This chain is Citrate/oxoglutarate carrier protein (YHM2), found in Saccharomyces cerevisiae (strain ATCC 204508 / S288c) (Baker's yeast).